The following is a 143-amino-acid chain: Mite group 2 allergen Pso o 2 (143 aa).

Residues 1 to 17 (MMKTLVVLAITLAVVSA) form the signal peptide. 3 disulfides stabilise this stretch: C25-C134, C38-C43, and C89-C94.

It belongs to the NPC2 family.

The protein resides in the secreted. The protein is Mite group 2 allergen Pso o 2 (ALLA) of Psoroptes ovis (Sheep scab mite).